The chain runs to 173 residues: Putative 4-hydroxy-4-methyl-2-oxoglutarate aldolase (173 aa).

Substrate is bound by residues 89–92 (GGNL) and arginine 111. Aspartate 112 lines the a divalent metal cation pocket.

Belongs to the class II aldolase/RraA-like family. In terms of assembly, homotrimer. A divalent metal cation is required as a cofactor.

It catalyses the reaction 4-hydroxy-4-methyl-2-oxoglutarate = 2 pyruvate. It carries out the reaction oxaloacetate + H(+) = pyruvate + CO2. Functionally, catalyzes the aldol cleavage of 4-hydroxy-4-methyl-2-oxoglutarate (HMG) into 2 molecules of pyruvate. Also contains a secondary oxaloacetate (OAA) decarboxylase activity due to the common pyruvate enolate transition state formed following C-C bond cleavage in the retro-aldol and decarboxylation reactions. The protein is Putative 4-hydroxy-4-methyl-2-oxoglutarate aldolase of Albidiferax ferrireducens (strain ATCC BAA-621 / DSM 15236 / T118) (Rhodoferax ferrireducens).